Here is a 115-residue protein sequence, read N- to C-terminus: MRLYINEIKIKDDTLYCYTEDTIKGLSEVGQMLVDSDNYAFAYTLDDGKAYAYLIFVQETWTMLHENMTKKIIINDELELTEFHQELTYILDNIKGNNNYGKEFVATVEETFDIE.

The protein belongs to the UPF0738 family.

This is UPF0738 protein SAB0871 from Staphylococcus aureus (strain bovine RF122 / ET3-1).